A 256-amino-acid polypeptide reads, in one-letter code: Imidazole glycerol phosphate synthase subunit HisF (256 aa).

Active-site residues include D12 and D131.

It belongs to the HisA/HisF family. Heterodimer of HisH and HisF.

It is found in the cytoplasm. It carries out the reaction 5-[(5-phospho-1-deoxy-D-ribulos-1-ylimino)methylamino]-1-(5-phospho-beta-D-ribosyl)imidazole-4-carboxamide + L-glutamine = D-erythro-1-(imidazol-4-yl)glycerol 3-phosphate + 5-amino-1-(5-phospho-beta-D-ribosyl)imidazole-4-carboxamide + L-glutamate + H(+). It functions in the pathway amino-acid biosynthesis; L-histidine biosynthesis; L-histidine from 5-phospho-alpha-D-ribose 1-diphosphate: step 5/9. In terms of biological role, IGPS catalyzes the conversion of PRFAR and glutamine to IGP, AICAR and glutamate. The HisF subunit catalyzes the cyclization activity that produces IGP and AICAR from PRFAR using the ammonia provided by the HisH subunit. The chain is Imidazole glycerol phosphate synthase subunit HisF from Stutzerimonas stutzeri (strain A1501) (Pseudomonas stutzeri).